The following is a 131-amino-acid chain: Small ribosomal subunit protein uS8 (131 aa).

The protein belongs to the universal ribosomal protein uS8 family. Part of the 30S ribosomal subunit. Contacts proteins S5 and S12.

In terms of biological role, one of the primary rRNA binding proteins, it binds directly to 16S rRNA central domain where it helps coordinate assembly of the platform of the 30S subunit. This Pelodictyon phaeoclathratiforme (strain DSM 5477 / BU-1) protein is Small ribosomal subunit protein uS8.